Here is a 101-residue protein sequence, read N- to C-terminus: Small ribosomal subunit protein uS14 (101 aa).

The protein belongs to the universal ribosomal protein uS14 family. Part of the 30S ribosomal subunit. Contacts proteins S3 and S10.

In terms of biological role, binds 16S rRNA, required for the assembly of 30S particles and may also be responsible for determining the conformation of the 16S rRNA at the A site. The polypeptide is Small ribosomal subunit protein uS14 (Neisseria meningitidis serogroup C / serotype 2a (strain ATCC 700532 / DSM 15464 / FAM18)).